Consider the following 431-residue polypeptide: Gamma-glutamyl phosphate reductase (431 aa).

Belongs to the gamma-glutamyl phosphate reductase family.

The protein resides in the cytoplasm. It carries out the reaction L-glutamate 5-semialdehyde + phosphate + NADP(+) = L-glutamyl 5-phosphate + NADPH + H(+). Its pathway is amino-acid biosynthesis; L-proline biosynthesis; L-glutamate 5-semialdehyde from L-glutamate: step 2/2. Its function is as follows. Catalyzes the NADPH-dependent reduction of L-glutamate 5-phosphate into L-glutamate 5-semialdehyde and phosphate. The product spontaneously undergoes cyclization to form 1-pyrroline-5-carboxylate. This Beijerinckia indica subsp. indica (strain ATCC 9039 / DSM 1715 / NCIMB 8712) protein is Gamma-glutamyl phosphate reductase.